The primary structure comprises 188 residues: MRVIASSIRKGNVLEQDGKLYVVLSAENIHPGKGTPVSQIEMRRISDGVKISERYKTTDQVEKVTIEERNYSFLYEDGEGFHFMEPESYDQVQVTKDVVGSAAPYLQEGMVVKLSMHDTTAVAITLPQRATLEVVDTEPVTKGQTASSSYKPAVLSNGVRTQVPPHIGTGTRIVVLTEDGSYVERAKD.

The protein belongs to the elongation factor P family.

The protein resides in the cytoplasm. The protein operates within protein biosynthesis; polypeptide chain elongation. In terms of biological role, involved in peptide bond synthesis. Stimulates efficient translation and peptide-bond synthesis on native or reconstituted 70S ribosomes in vitro. Probably functions indirectly by altering the affinity of the ribosome for aminoacyl-tRNA, thus increasing their reactivity as acceptors for peptidyl transferase. This is Elongation factor P from Rhodopseudomonas palustris (strain ATCC BAA-98 / CGA009).